The primary structure comprises 58 residues: Metallothionein-1 (58 aa).

Positions 1–28 (PGPCCNDKCVCKEGGCKEGCQCTSCRCS) are beta. The a divalent metal cation site is built by Cys4, Cys5, Cys9, Cys11, Cys16, Cys20, Cys22, Cys25, Cys27, Cys30, Cys33, Cys37, Cys39, Cys45, Cys49, Cys53, Cys55, and Cys56. The alpha stretch occupies residues 29-58 (PCEKCSSGCKCANKEECSKTCSKACSCCPT).

This sequence belongs to the metallothionein superfamily. Type 3 family.

Functionally, metallothioneins have a high content of cysteine residues that bind various heavy metals. Class I MTS in marine crustacea are involved in the sequestration of elevated levels of heavy-metal ions. This chain is Metallothionein-1, found in Scylla serrata (Mud crab).